Consider the following 547-residue polypeptide: Large cysteine-rich periplasmic protein OmcB, serovar C (547 aa).

Residues 1 to 22 form the signal peptide; sequence MNKLIRRAVTIFAVTSVASLFA. The propeptide occupies 23 to 40; that stretch reads SGVLETSMAESLSTNVIS. Positions 45–84 are disordered; it reads KAKDNTSHKSKKARKNHSKETPVDRKEVAPVHESKATGPK. Over residues 52 to 61 the composition is skewed to basic residues; the sequence is HKSKKARKNH. Over residues 62–79 the composition is skewed to basic and acidic residues; the sequence is SKETPVDRKEVAPVHESK.

As to quaternary structure, part of a disulfide cross-linked outer membrane complex (COMC) composed of the major outer membrane porin (MOMP), the small cysteine-rich protein (OmcA) and the large cysteine-rich periplasmic protein (OmcB).

Its subcellular location is the periplasm. In terms of biological role, in elementary bodies (EBs, the infectious stage, which is able to survive outside the host cell) provides the structural integrity of the outer envelope through disulfide cross-links with the small cysteine-rich protein and the major outer membrane porin. It has been described in publications as the Sarkosyl-insoluble COMC (Chlamydia outer membrane complex), and serves as the functional equivalent of peptidoglycan. This Chlamydia trachomatis protein is Large cysteine-rich periplasmic protein OmcB, serovar C (omcB).